Here is a 1187-residue protein sequence, read N- to C-terminus: Disease resistance protein TAO1 (1187 aa).

A TIR domain is found at 38-202 (WLHPVFLSFR…KISKDVSDVL (165 aa)). The active site involves Glu113. The region spanning 217-478 (EAHTTEITSL…FFRRERIETL (262 aa)) is the NB-ARC domain. 14 LRR repeats span residues 498-522 (DKSL…GLDI), 611-633 (SRKL…KFNP), 635-658 (FLVK…PIRN), 660-679 (KWMD…FSTA), 680-703 (TNLQ…IGNA), 704-727 (TNLL…IGNL), 728-750 (TNLK…SFGN), 752-775 (TSLK…IGNI), 799-823 (NTNL…MLNL), 824-849 (TRLE…VINL), 870-894 (ATNL…IWNI), 895-918 (TNLQ…VENA), 920-942 (NLQS…IWRI), and 953-974 (CSSL…LILD).

It catalyses the reaction NAD(+) + H2O = ADP-D-ribose + nicotinamide + H(+). Functionally, TIR-NB-LRR receptor-like protein that contributes to disease resistance induced by the Pseudomonas syringae type III effector AvrB. Acts additively with RPM1 to generate a full disease resistance response to P.syringae expressing this type III effector. In Arabidopsis thaliana (Mouse-ear cress), this protein is Disease resistance protein TAO1.